Here is a 419-residue protein sequence, read N- to C-terminus: MGACISFFSSSSPSKTGLHSHATTNNHSNGTEFSSTTGATTNSSVGQQSQFSDISTGIISDSGKLLESPNLKVYNFLDLKTATKNFKPDSMLGQGGFGKVYRGWVDATTLAPSRVGSGMIVAIKRLNSESVQGFAEWRSEVNFLGMLSHRNLVKLLGYCREDKELLLVYEFMPKGSLESHLFRRNDPFPWDLRIKIVIGAARGLAFLHSLQREVIYRDFKASNILLDSNYDAKLSDFGLAKLGPADEKSHVTTRIMGTYGYAAPEYMATGHLYVKSDVFAFGVVLLEIMTGLTAHNTKRPRGQESLVDWLRPELSNKHRVKQIMDKGIKGQYTTKVATEMARITLSCIEPDPKNRPHMKEVVEVLEHIQGLNVVPNRSSTKQAVANSSRSSPHHYRYKAGALGAERKRATPGRFGSVEK.

G2 carries the N-myristoyl glycine lipid modification. The S-palmitoyl cysteine moiety is linked to residue C4. Residues 8-48 (FSSSSPSKTGLHSHATTNNHSNGTEFSSTTGATTNSSVGQQ) are disordered. Polar residues predominate over residues 15–48 (KTGLHSHATTNNHSNGTEFSSTTGATTNSSVGQQ). The Protein kinase domain maps to 86–368 (FKPDSMLGQG…KEVVEVLEHI (283 aa)). Residue 92 to 100 (LGQGGFGKV) coordinates ATP. S117 carries the phosphoserine modification. K124 serves as a coordination point for ATP. Phosphotyrosine is present on Y169. The active-site Proton acceptor is D218. S222 bears the Phosphoserine mark. A phosphothreonine mark is found at T253 and T258. Residue Y266 is modified to Phosphotyrosine. Over residues 378–390 (SSTKQAVANSSRS) the composition is skewed to polar residues. The disordered stretch occupies residues 378–419 (SSTKQAVANSSRSSPHHYRYKAGALGAERKRATPGRFGSVEK).

Belongs to the protein kinase superfamily. Ser/Thr protein kinase family. In terms of assembly, interacts with SOBIR1/EVR and RLK5/HAE. Autophosphorylated on serine, threonine and tyrosine residues.

It localises to the cell membrane. Its subcellular location is the nucleus. It catalyses the reaction L-seryl-[protein] + ATP = O-phospho-L-seryl-[protein] + ADP + H(+). It carries out the reaction L-threonyl-[protein] + ATP = O-phospho-L-threonyl-[protein] + ADP + H(+). In terms of biological role, acts as a spatial inhibitor of signaling that modulates abscission zone cell adhesion and expansion. Acts both directly and indirectly by physically interacting with RLK5/HAE and SOBIR1/EVR at the cell surface. The sequence is that of Probable serine/threonine-protein kinase CST from Arabidopsis thaliana (Mouse-ear cress).